Here is a 631-residue protein sequence, read N- to C-terminus: Dolichyl-diphosphooligosaccharide--protein glycosyltransferase subunit 2 (631 aa).

Positions methionine 1–alanine 22 are cleaved as a signal peptide. Over leucine 23–valine 540 the chain is Lumenal. A glycan (N-linked (GlcNAc...) asparagine) is linked at asparagine 106. Residue lysine 154 forms a Glycyl lysine isopeptide (Lys-Gly) (interchain with G-Cter in ubiquitin) linkage. The helical transmembrane segment at valine 541–isoleucine 561 threads the bilayer. Topologically, residues arginine 562–threonine 571 are cytoplasmic. Residues phenylalanine 572 to valine 592 form a helical membrane-spanning segment. The Lumenal segment spans residues tyrosine 593–glutamine 596. The helical transmembrane segment at leucine 597 to glycine 617 threads the bilayer. The Cytoplasmic segment spans residues asparagine 618 to histidine 631.

The protein belongs to the SWP1 family. In terms of assembly, component of the oligosaccharyltransferase (OST) complex. OST exists in two different complex forms which contain common core subunits RPN1, RPN2, OST48, OST4, DAD1 and TMEM258, either STT3A or STT3B as catalytic subunits, and form-specific accessory subunits. STT3A complex assembly occurs through the formation of 3 subcomplexes. Subcomplex 1 contains RPN1 and TMEM258, subcomplex 2 contains the STT3A-specific subunits STT3A, DC2/OSTC, and KCP2 as well as the core subunit OST4, and subcomplex 3 contains RPN2, DAD1, and OST48. The STT3A complex can form stable complexes with the Sec61 complex or with both the Sec61 and TRAP complexes. Interacts with DDI2. Interacts with TMEM35A/NACHO.

The protein localises to the endoplasmic reticulum. The protein resides in the endoplasmic reticulum membrane. Its pathway is protein modification; protein glycosylation. Subunit of the oligosaccharyl transferase (OST) complex that catalyzes the initial transfer of a defined glycan (Glc(3)Man(9)GlcNAc(2) in eukaryotes) from the lipid carrier dolichol-pyrophosphate to an asparagine residue within an Asn-X-Ser/Thr consensus motif in nascent polypeptide chains, the first step in protein N-glycosylation. N-glycosylation occurs cotranslationally and the complex associates with the Sec61 complex at the channel-forming translocon complex that mediates protein translocation across the endoplasmic reticulum (ER). All subunits are required for a maximal enzyme activity. This is Dolichyl-diphosphooligosaccharide--protein glycosyltransferase subunit 2 from Bos taurus (Bovine).